Here is a 122-residue protein sequence, read N- to C-terminus: Large ribosomal subunit protein uL14 (122 aa).

It belongs to the universal ribosomal protein uL14 family. In terms of assembly, part of the 50S ribosomal subunit. Forms a cluster with proteins L3 and L19. In the 70S ribosome, L14 and L19 interact and together make contacts with the 16S rRNA in bridges B5 and B8.

Binds to 23S rRNA. Forms part of two intersubunit bridges in the 70S ribosome. This Bradyrhizobium diazoefficiens (strain JCM 10833 / BCRC 13528 / IAM 13628 / NBRC 14792 / USDA 110) protein is Large ribosomal subunit protein uL14.